A 347-amino-acid chain; its full sequence is N-acetyl-gamma-glutamyl-phosphate reductase (347 aa).

Residue Cys150 is part of the active site.

This sequence belongs to the NAGSA dehydrogenase family. Type 1 subfamily.

It localises to the cytoplasm. It carries out the reaction N-acetyl-L-glutamate 5-semialdehyde + phosphate + NADP(+) = N-acetyl-L-glutamyl 5-phosphate + NADPH + H(+). Its pathway is amino-acid biosynthesis; L-arginine biosynthesis; N(2)-acetyl-L-ornithine from L-glutamate: step 3/4. In terms of biological role, catalyzes the NADPH-dependent reduction of N-acetyl-5-glutamyl phosphate to yield N-acetyl-L-glutamate 5-semialdehyde. This chain is N-acetyl-gamma-glutamyl-phosphate reductase, found in Leifsonia xyli subsp. xyli (strain CTCB07).